We begin with the raw amino-acid sequence, 467 residues long: SVGFKAGVKDYKLTYYTPDYETKDTDILAAFRVTPQPGVPPEEAGAAVAAESSTGTWTTVWTDGLTSLDRYKGRCYHIEPVAGEEEQYIAYVAYPLDLFEEGSVTNMFTSIVGNVFGFKALRALRLEDLRIPIAYVKTFQGPPHGIQVERDKLNKYGRPLLGCTIKPKLGLSAKNYGRAVYECLRGGLDFTKDDENVNSQPFMRWRDRFVFCAEALYKAQAETGEIKGHYLNATAGTCEEMMKRAVFARELGVPIVMHDYLTGGFTANTTLAHYCRDNGLLLHIHRAMHAVIDRQKNHGMHFRVLAKALRMSGGDHIHAGTVVGKLEGERDITLGFVDLLRDDFIEKDRSRGIYFTQDWVSMPGVLPVASGGIHVWHMPALTEIFGDDSVLQFGGGTLGHPWGNAPGAVANRVALEACVQARNEGRDLAREGNEIIREACKWSPELAAACEVWKEIKFEFKAVDTLD.

N6,N6,N6-trimethyllysine is present on K5. Substrate-binding residues include N114 and T164. The active-site Proton acceptor is the K166. Substrate is bound at residue K168. 3 residues coordinate Mg(2+): K192, D194, and E195. The residue at position 192 (K192) is an N6-carboxylysine. Residue H285 is the Proton acceptor of the active site. Substrate contacts are provided by R286, H318, and S370.

This sequence belongs to the RuBisCO large chain family. Type I subfamily. In terms of assembly, heterohexadecamer of 8 large chains and 8 small chains; disulfide-linked. The disulfide link is formed within the large subunit homodimers. Mg(2+) is required as a cofactor. In terms of processing, the disulfide bond which can form in the large chain dimeric partners within the hexadecamer appears to be associated with oxidative stress and protein turnover.

The protein localises to the plastid. Its subcellular location is the chloroplast. The catalysed reaction is 2 (2R)-3-phosphoglycerate + 2 H(+) = D-ribulose 1,5-bisphosphate + CO2 + H2O. The enzyme catalyses D-ribulose 1,5-bisphosphate + O2 = 2-phosphoglycolate + (2R)-3-phosphoglycerate + 2 H(+). Functionally, ruBisCO catalyzes two reactions: the carboxylation of D-ribulose 1,5-bisphosphate, the primary event in carbon dioxide fixation, as well as the oxidative fragmentation of the pentose substrate in the photorespiration process. Both reactions occur simultaneously and in competition at the same active site. This Tasmannia insipida (Pepperbush) protein is Ribulose bisphosphate carboxylase large chain.